The sequence spans 224 residues: PKHD-type hydroxylase Shewmr7_0698 (224 aa).

The region spanning 78–176 (QFYPPLFNRY…RTAAFMWLQS (99 aa)) is the Fe2OG dioxygenase domain. Residues histidine 96, aspartate 98, and histidine 157 each contribute to the Fe cation site. Residue arginine 167 coordinates 2-oxoglutarate.

Fe(2+) serves as cofactor. It depends on L-ascorbate as a cofactor.

The sequence is that of PKHD-type hydroxylase Shewmr7_0698 from Shewanella sp. (strain MR-7).